A 127-amino-acid polypeptide reads, in one-letter code: Fluoride-specific ion channel FluC (127 aa).

4 helical membrane passes run 4–24 (LLLAVFIGGGTGSVARWLLSM), 35–55 (LGTLAANLIGAFIIGMGFAWF), 71–91 (TGFCGGLTTFSTFSAEVVFLL), and 103–123 (VFVNLLGSFAMTALAFWLFSA). Na(+) is bound by residues Gly-75 and Thr-78.

Belongs to the fluoride channel Fluc/FEX (TC 1.A.43) family.

Its subcellular location is the cell inner membrane. It carries out the reaction fluoride(in) = fluoride(out). Na(+) is not transported, but it plays an essential structural role and its presence is essential for fluoride channel function. Fluoride-specific ion channel. Important for reducing fluoride concentration in the cell, thus reducing its toxicity. The sequence is that of Fluoride-specific ion channel FluC from Escherichia coli O17:K52:H18 (strain UMN026 / ExPEC).